Reading from the N-terminus, the 540-residue chain is Glucose-6-phosphate isomerase (540 aa).

Glutamate 350 (proton donor) is an active-site residue. Catalysis depends on residues histidine 381 and lysine 503.

Belongs to the GPI family.

It localises to the cytoplasm. The catalysed reaction is alpha-D-glucose 6-phosphate = beta-D-fructose 6-phosphate. The protein operates within carbohydrate biosynthesis; gluconeogenesis. Its pathway is carbohydrate degradation; glycolysis; D-glyceraldehyde 3-phosphate and glycerone phosphate from D-glucose: step 2/4. In terms of biological role, catalyzes the reversible isomerization of glucose-6-phosphate to fructose-6-phosphate. In Paraburkholderia xenovorans (strain LB400), this protein is Glucose-6-phosphate isomerase.